The sequence spans 83 residues: U5-theraphotoxin-Hs1c (83 aa).

The signal sequence occupies residues 1 to 21; that stretch reads MKTSMFLTLTGLVLLFVVCYA. Residues 22-49 constitute a propeptide that is removed on maturation; the sequence is SESEEKEFPKELLSSIFAADSDFKVEER. 3 disulfide bridges follow: C51-C63, C56-C68, and C62-C75.

It belongs to the neurotoxin 10 (Hwtx-1) family. 51 (Hntx-8) subfamily. Hntx-8 sub-subfamily. Expressed by the venom gland.

It localises to the secreted. Agglutinates erythrocytes. This Cyriopagopus schmidti (Chinese bird spider) protein is U5-theraphotoxin-Hs1c.